The chain runs to 365 residues: Peptide chain release factor 1 (365 aa).

Gln-240 carries the N5-methylglutamine modification.

Belongs to the prokaryotic/mitochondrial release factor family. In terms of processing, methylated by PrmC. Methylation increases the termination efficiency of RF1.

The protein resides in the cytoplasm. In terms of biological role, peptide chain release factor 1 directs the termination of translation in response to the peptide chain termination codons UAG and UAA. This Bifidobacterium animalis subsp. lactis (strain AD011) protein is Peptide chain release factor 1.